The sequence spans 153 residues: MVFEGHLVGTGLKVGVVVGRFNEFITSKLLGGALDGLKRHGVEENDIDVAWVPGAFEIPLIAKKMANSGKYDAVITLGTVIRGATTHYDYVCNEVAKGVASLSLQTDIPVIFGVLTTETIEQAIERAGTKAGNKGYESAVAAIEMAHLSKQWA.

5-amino-6-(D-ribitylamino)uracil contacts are provided by residues phenylalanine 21, 55–57 (AFE), and 79–81 (TVI). 84–85 (AT) contacts (2S)-2-hydroxy-3-oxobutyl phosphate. The Proton donor role is filled by histidine 87. Phenylalanine 112 serves as a coordination point for 5-amino-6-(D-ribitylamino)uracil. Arginine 126 lines the (2S)-2-hydroxy-3-oxobutyl phosphate pocket.

This sequence belongs to the DMRL synthase family. Forms an icosahedral capsid composed of 60 subunits, arranged as a dodecamer of pentamers.

The enzyme catalyses (2S)-2-hydroxy-3-oxobutyl phosphate + 5-amino-6-(D-ribitylamino)uracil = 6,7-dimethyl-8-(1-D-ribityl)lumazine + phosphate + 2 H2O + H(+). It functions in the pathway cofactor biosynthesis; riboflavin biosynthesis; riboflavin from 2-hydroxy-3-oxobutyl phosphate and 5-amino-6-(D-ribitylamino)uracil: step 1/2. Catalyzes the formation of 6,7-dimethyl-8-ribityllumazine by condensation of 5-amino-6-(D-ribitylamino)uracil with 3,4-dihydroxy-2-butanone 4-phosphate. This is the penultimate step in the biosynthesis of riboflavin. This chain is 6,7-dimethyl-8-ribityllumazine synthase, found in Bacillus cereus (strain 03BB102).